The following is a 102-amino-acid chain: uncharacterized protein (102 aa).

This is an uncharacterized protein from Homo sapiens (Human).